A 242-amino-acid polypeptide reads, in one-letter code: C-reactive protein 1.1 (242 aa).

The signal sequence occupies residues 1–24 (MKTFHGPTCGTAVSLCLLLFLTSA). In terms of domain architecture, Pentraxin (PTX) spans 30–241 (ITSKVKFPPS…GVVLSPNEIC (212 aa)). The phosphocholine site is built by T60 and Y63. Cystine bridges form between C62/C125 and C112/C144. D85 and N86 together coordinate Ca(2+). N147 carries an N-linked (GlcNAc...) asparagine glycan. Residues Q169, D170, and Q180 each contribute to the Ca(2+) site. C207 and C241 are joined by a disulfide.

This sequence belongs to the pentraxin family. In terms of assembly, homopentamer. Pentraxin (or pentaxin) have a discoid arrangement of 5 non-covalently bound subunits. The cofactor is Ca(2+).

The protein localises to the secreted. In terms of biological role, might serve the role of immunoglobulins. This is C-reactive protein 1.1 from Limulus polyphemus (Atlantic horseshoe crab).